The primary structure comprises 333 residues: Biotin synthase (333 aa).

One can recognise a Radical SAM core domain in the interval 47 to 273 (YYGNKVKLNM…MNPTKEIRIA (227 aa)). [4Fe-4S] cluster-binding residues include Cys65, Cys69, and Cys72. [2Fe-2S] cluster contacts are provided by Cys109, Cys141, Cys201, and Arg271.

It belongs to the radical SAM superfamily. Biotin synthase family. Homodimer. The cofactor is [4Fe-4S] cluster. [2Fe-2S] cluster serves as cofactor.

The enzyme catalyses (4R,5S)-dethiobiotin + (sulfur carrier)-SH + 2 reduced [2Fe-2S]-[ferredoxin] + 2 S-adenosyl-L-methionine = (sulfur carrier)-H + biotin + 2 5'-deoxyadenosine + 2 L-methionine + 2 oxidized [2Fe-2S]-[ferredoxin]. It functions in the pathway cofactor biosynthesis; biotin biosynthesis; biotin from 7,8-diaminononanoate: step 2/2. In terms of biological role, catalyzes the conversion of dethiobiotin (DTB) to biotin by the insertion of a sulfur atom into dethiobiotin via a radical-based mechanism. The protein is Biotin synthase of Geobacillus kaustophilus (strain HTA426).